A 164-amino-acid chain; its full sequence is Transcription antitermination protein NusB (164 aa).

It belongs to the NusB family.

Involved in transcription antitermination. Required for transcription of ribosomal RNA (rRNA) genes. Binds specifically to the boxA antiterminator sequence of the ribosomal RNA (rrn) operons. The sequence is that of Transcription antitermination protein NusB from Chlorobaculum parvum (strain DSM 263 / NCIMB 8327) (Chlorobium vibrioforme subsp. thiosulfatophilum).